Here is a 105-residue protein sequence, read N- to C-terminus: MGRVTAPAPLEIEKTESAEEVFAVPEPDVPWVTIVHNDPVNLMSYVTYVFQTYFGYSKDKATKLMLDVHHKGRAVVSSGTREEMERDVQAMHGYGLWATLQQDRK.

Belongs to the ClpS family. As to quaternary structure, binds to the N-terminal domain of the chaperone ClpA.

Its function is as follows. Involved in the modulation of the specificity of the ClpAP-mediated ATP-dependent protein degradation. The protein is ATP-dependent Clp protease adapter protein ClpS of Streptomyces avermitilis (strain ATCC 31267 / DSM 46492 / JCM 5070 / NBRC 14893 / NCIMB 12804 / NRRL 8165 / MA-4680).